The following is a 116-amino-acid chain: uncharacterized protein (116 aa).

This is an uncharacterized protein from Saccharolobus islandicus (Sulfolobus islandicus).